A 250-amino-acid chain; its full sequence is Triosephosphate isomerase (250 aa).

Residue 9 to 11 participates in substrate binding; sequence NWK. Histidine 94 serves as the catalytic Electrophile. Residue glutamate 166 is the Proton acceptor of the active site. Residues glycine 172, serine 211, and 232 to 233 contribute to the substrate site; that span reads GG.

Belongs to the triosephosphate isomerase family. In terms of assembly, homodimer.

It localises to the cytoplasm. It catalyses the reaction D-glyceraldehyde 3-phosphate = dihydroxyacetone phosphate. The protein operates within carbohydrate biosynthesis; gluconeogenesis. It functions in the pathway carbohydrate degradation; glycolysis; D-glyceraldehyde 3-phosphate from glycerone phosphate: step 1/1. Its function is as follows. Involved in the gluconeogenesis. Catalyzes stereospecifically the conversion of dihydroxyacetone phosphate (DHAP) to D-glyceraldehyde-3-phosphate (G3P). The chain is Triosephosphate isomerase from Methylococcus capsulatus (strain ATCC 33009 / NCIMB 11132 / Bath).